The chain runs to 117 residues: Gamma-aminobutyric acid receptor-associated protein-like 2 (117 aa).

Residue Lys24 is modified to N6-acetyllysine. 3 positions are modified to phosphoserine: Ser39, Ser87, and Ser88. The Phosphatidylethanolamine amidated glycine; alternate moiety is linked to residue Gly116. Gly116 is lipidated: Phosphatidylserine amidated glycine; alternate. A propeptide (removed in mature form) is located at residue Phe117.

The protein belongs to the ATG8 family. As to quaternary structure, monomer. Interacts with ATG3, ATG7, ATG13 and ULK1. Interacts with TP53INP1 and TP53INP2. Interacts with TBC1D25. Directly interacts with SQSTM1 and BNIP3. Interacts with TECPR2 and PCM1. Interacts with TBC1D5. Interacts with TRIM5. Interacts with MEFV and TRIM21. Interacts with WDFY3. Interacts with UBA5; promoting recruitment of UBA5 to the endoplasmic reticulum membrane. Interacts with GOSR1. Interacts with KBTBD6 and KBTBD7; the interaction is direct. Interacts with reticulophagy regulators RETREG1, RETREG2 and RETREG3. Interacts with IRGM. Interacts with DNM2. Interacts with NCOA4. Interacts with IRGQ. The precursor molecule is cleaved by ATG4 (ATG4A, ATG4B, ATG4C or ATG4D) to expose the glycine at the C-terminus and form the cytosolic form, GABARAPL2-I. The processed form is then activated by APG7L/ATG7, transferred to ATG3 and conjugated to phosphatidylethanolamine (PE) phospholipid to form the membrane-bound form, GABARAPL2-II. During non-canonical autophagy, the processed form is conjugated to phosphatidylserine (PS) phospholipid. ATG4 proteins also mediate the delipidation of PE-conjugated forms required for GABARAPL2 recycling when autophagosomes fuse with lysosomes. In addition, ATG4B and ATG4D mediate delipidation of ATG8 proteins conjugated to PS during non-canonical autophagy. ATG4B constitutes the major protein for proteolytic activation. ATG4D is the main enzyme for delipidation activity. Post-translationally, phosphorylation at Ser-87 and Ser-88 by TBK1 prevents interaction with ATG4 (ATG4A, ATG4B, ATG4C or ATG4D). Phosphorylation by TBK1 on autophagosomes prevents their delipidation by ATG4 and premature removal from nascent autophagosomes. In terms of tissue distribution, ubiquitous. Expressed at high levels in the brain, heart, prostate, ovary, spleen and skeletal muscle. Expressed at very low levels in lung, thymus and small intestine.

The protein resides in the cytoplasmic vesicle. The protein localises to the autophagosome. It localises to the endoplasmic reticulum membrane. Its subcellular location is the golgi apparatus. In terms of biological role, ubiquitin-like modifier involved in intra-Golgi traffic. Modulates intra-Golgi transport through coupling between NSF activity and SNAREs activation. It first stimulates the ATPase activity of NSF which in turn stimulates the association with GOSR1. Involved in autophagy. Plays a role in mitophagy which contributes to regulate mitochondrial quantity and quality by eliminating the mitochondria to a basal level to fulfill cellular energy requirements and preventing excess ROS production. Whereas LC3s are involved in elongation of the phagophore membrane, the GABARAP/GATE-16 subfamily is essential for a later stage in autophagosome maturation. The protein is Gamma-aminobutyric acid receptor-associated protein-like 2 of Bos taurus (Bovine).